The primary structure comprises 286 residues: Ribosome maturation factor RimP (286 aa).

The segment covering Leu200–Leu224 has biased composition (acidic residues). Residues Leu200–His286 form a disordered region. A compositionally biased stretch (basic residues) spans Val248–Lys267. Residues Ala273–His286 show a composition bias toward polar residues.

It belongs to the RimP family.

It is found in the cytoplasm. Required for maturation of 30S ribosomal subunits. The chain is Ribosome maturation factor RimP from Xanthobacter autotrophicus (strain ATCC BAA-1158 / Py2).